Consider the following 296-residue polypeptide: tRNA dimethylallyltransferase (296 aa).

ATP is bound at residue 11–18 (GPTAVGKT). Residue 13–18 (TAVGKT) coordinates substrate. Residues 36-39 (DSQQ) are interaction with substrate tRNA.

This sequence belongs to the IPP transferase family. In terms of assembly, monomer. Requires Mg(2+) as cofactor.

It carries out the reaction adenosine(37) in tRNA + dimethylallyl diphosphate = N(6)-dimethylallyladenosine(37) in tRNA + diphosphate. Catalyzes the transfer of a dimethylallyl group onto the adenine at position 37 in tRNAs that read codons beginning with uridine, leading to the formation of N6-(dimethylallyl)adenosine (i(6)A). This is tRNA dimethylallyltransferase from Streptococcus equi subsp. zooepidemicus (strain H70).